Here is a 211-residue protein sequence, read N- to C-terminus: Redox-sensing transcriptional repressor Rex (211 aa).

The segment at residues Leu18 to Phe57 is a DNA-binding region (H-T-H motif). Gly92–Gly97 provides a ligand contact to NAD(+).

It belongs to the transcriptional regulatory Rex family. In terms of assembly, homodimer.

Its subcellular location is the cytoplasm. Functionally, modulates transcription in response to changes in cellular NADH/NAD(+) redox state. This Shouchella clausii (strain KSM-K16) (Alkalihalobacillus clausii) protein is Redox-sensing transcriptional repressor Rex.